A 409-amino-acid polypeptide reads, in one-letter code: Nucleoprotein (409 aa).

Disordered stretches follow at residues 1–32 (MASG…SSGN), 44–69 (LNSP…QQHG), 121–145 (ADVK…LRFS), 164–195 (RSGR…SEGD), and 238–259 (VDQV…DKMN). The span at 15-31 (PVIKLGGPKPPKVGSSG) shows a compositional bias: low complexity. The segment at 29-160 (SSGNASWFQA…GNFRWDFIPL (132 aa)) is RNA-binding. The CoV N NTD domain occupies 31–156 (GNASWFQAIK…GGPDGNFRWD (126 aa)). Residues 164–179 (RSGRSTAASSAASSRA) are compositionally biased toward low complexity. 2 stretches are compositionally biased toward basic and acidic residues: residues 180 to 192 (PSRD…RSGS) and 247 to 259 (KGKE…DKMN). 2 positions are modified to phosphoserine; by host: Ser190 and Ser192. The CoV N CTD domain occupies 215–331 (TKAKADEMAH…QCVDGVGTRP (117 aa)). The tract at residues 226 to 333 (RYCKRTIPPG…VDGVGTRPKD (108 aa)) is dimerization. Cys320 and Cys323 are disulfide-bonded. The tract at residues 326–409 (GVGTRPKDDE…GDSALGENEL (84 aa)) is disordered. Residues 341–358 (RSSSRPATRTSSPALRQQ) are compositionally biased toward low complexity. Residues 368-384 (KQDDEVDKALTSDEERN) are compositionally biased toward basic and acidic residues. The residue at position 378 (Thr378) is a Phosphothreonine; by host. Ser379 carries the phosphoserine; by host modification.

It belongs to the gammacoronavirus nucleocapsid protein family. In terms of assembly, homooligomer. Both monomeric and oligomeric forms interact with RNA. Interacts with protein M. Interacts with NSP3; this interaction serves to tether the genome to the newly translated replicase-transcriptase complex at a very early stage of infection. Post-translationally, ADP-ribosylated. The ADP-ribosylation is retained in the virion during infection. In terms of processing, phosphorylated on serine and threonine residues.

The protein localises to the virion. It is found in the host endoplasmic reticulum-Golgi intermediate compartment. The protein resides in the host Golgi apparatus. In terms of biological role, packages the positive strand viral genome RNA into a helical ribonucleocapsid (RNP) and plays a fundamental role during virion assembly through its interactions with the viral genome and membrane protein M. Plays an important role in enhancing the efficiency of subgenomic viral RNA transcription as well as viral replication. In Gallus gallus (Chicken), this protein is Nucleoprotein.